Reading from the N-terminus, the 380-residue chain is Variant-surface-glycoprotein phospholipase C (380 aa).

The PI-PLC X-box domain maps to 31–205; it reads ITQVCFVGSH…SRRRIFLVVG (175 aa).

In terms of assembly, monomer.

Its subcellular location is the membrane. The enzyme catalyses a 6-(alpha-D-glucosaminyl)-1-(1,2-diacyl-sn-glycero-3-phospho)-1D-myo-inositol = 6-(alpha-D-glucosaminyl)-1D-myo-inositol 1,2-cyclic phosphate + a 1,2-diacyl-sn-glycerol. Functionally, by hydrolysis of the attached glycolipid, releases soluble variant surface glycoprotein containing phosphoinositol from the cell wall of T.brucei after cell lysis. It also cleaves similar membrane anchors on some mammalian proteins. VSG lipase may play a role in processes such as parasite differentiation or antigenic variation. In Trypanosoma cruzi, this protein is Variant-surface-glycoprotein phospholipase C.